The following is a 270-amino-acid chain: Large ribosomal subunit protein bL21m (270 aa).

The transit peptide at Met1–Phe68 directs the protein to the mitochondrion. The disordered stretch occupies residues Phe68–Val113. The segment covering Thr75–Met101 has biased composition (acidic residues). Positions Glu102–Val113 are enriched in basic and acidic residues.

This sequence belongs to the bacterial ribosomal protein bL21 family. As to quaternary structure, component of the mitochondrial ribosome large subunit. As to expression, constitutively expressed in roots, stems, leaves, flowers, pistils and siliques.

The protein localises to the mitochondrion. This protein binds to 23S ribosomal RNA in the presence of protein L20. Required for karyogamy during female gametophyte development, when the two polar nuclei fuse to form the diploid central cell nucleus, and during double fertilization of the egg cell and the central cell. In Arabidopsis thaliana (Mouse-ear cress), this protein is Large ribosomal subunit protein bL21m.